The chain runs to 514 residues: Putative thymidine phosphorylase (514 aa).

The protein belongs to the thymidine/pyrimidine-nucleoside phosphorylase family. Type 2 subfamily.

It carries out the reaction thymidine + phosphate = 2-deoxy-alpha-D-ribose 1-phosphate + thymine. This is Putative thymidine phosphorylase from Rhodopseudomonas palustris (strain ATCC BAA-98 / CGA009).